Here is a 460-residue protein sequence, read N- to C-terminus: tRNA (guanine(10)-N(2))-methyltransferase TRMT11 (460 aa).

Residue Ala-2 is modified to N-acetylalanine.

Belongs to the class I-like SAM-binding methyltransferase superfamily. TRM11 methyltransferase family. In terms of assembly, part of the heterodimeric TRMT11-TRM112 methyltransferase complex; this complex forms an active tRNA methyltransferase, where TRMT112 acts as an activator of the catalytic subunit TRMT11.

The protein resides in the cytoplasm. The catalysed reaction is guanosine(10) in tRNA + S-adenosyl-L-methionine = N(2)-methylguanosine(10) in tRNA + S-adenosyl-L-homocysteine + H(+). Its function is as follows. Catalytic subunit of the TRMT11-TRM112 methyltransferase complex, that specifically mediates the S-adenosyl-L-methionine-dependent N(2)-methylation of guanosine nucleotide at position 10 (m2G10) in tRNAs. This is one of the major tRNA (guanine-N(2))-methyltransferases. The protein is tRNA (guanine(10)-N(2))-methyltransferase TRMT11 of Mus musculus (Mouse).